A 244-amino-acid polypeptide reads, in one-letter code: LexA repressor (244 aa).

The disordered stretch occupies residues 1 to 24 (MSDSSDTTVDGASDGASDGASGAD). Positions 10 to 24 (DGASDGASDGASGAD) are enriched in low complexity. Positions 58 to 78 (IREIGDAVGLTSTSSVAHQLR) form a DNA-binding region, H-T-H motif. Active-site for autocatalytic cleavage activity residues include S168 and K205.

Belongs to the peptidase S24 family. As to quaternary structure, homodimer.

The enzyme catalyses Hydrolysis of Ala-|-Gly bond in repressor LexA.. Its function is as follows. Represses a number of genes involved in the response to DNA damage (SOS response), including recA and lexA. In the presence of single-stranded DNA, RecA interacts with LexA causing an autocatalytic cleavage which disrupts the DNA-binding part of LexA, leading to derepression of the SOS regulon and eventually DNA repair. This chain is LexA repressor, found in Mycobacterium ulcerans (strain Agy99).